The sequence spans 219 residues: Phosphatidylserine decarboxylase proenzyme (219 aa).

Residue Ser-188 is the Schiff-base intermediate with substrate; via pyruvic acid of the active site. Position 188 is a pyruvic acid (Ser); by autocatalysis (Ser-188).

Belongs to the phosphatidylserine decarboxylase family. PSD-A subfamily. As to quaternary structure, heterodimer of a large membrane-associated beta subunit and a small pyruvoyl-containing alpha subunit. Pyruvate is required as a cofactor. Post-translationally, is synthesized initially as an inactive proenzyme. Formation of the active enzyme involves a self-maturation process in which the active site pyruvoyl group is generated from an internal serine residue via an autocatalytic post-translational modification. Two non-identical subunits are generated from the proenzyme in this reaction, and the pyruvate is formed at the N-terminus of the alpha chain, which is derived from the carboxyl end of the proenzyme. The post-translation cleavage follows an unusual pathway, termed non-hydrolytic serinolysis, in which the side chain hydroxyl group of the serine supplies its oxygen atom to form the C-terminus of the beta chain, while the remainder of the serine residue undergoes an oxidative deamination to produce ammonia and the pyruvoyl prosthetic group on the alpha chain.

It localises to the cell membrane. The catalysed reaction is a 1,2-diacyl-sn-glycero-3-phospho-L-serine + H(+) = a 1,2-diacyl-sn-glycero-3-phosphoethanolamine + CO2. It functions in the pathway phospholipid metabolism; phosphatidylethanolamine biosynthesis; phosphatidylethanolamine from CDP-diacylglycerol: step 2/2. Functionally, catalyzes the formation of phosphatidylethanolamine (PtdEtn) from phosphatidylserine (PtdSer). The sequence is that of Phosphatidylserine decarboxylase proenzyme from Citrifermentans bemidjiense (strain ATCC BAA-1014 / DSM 16622 / JCM 12645 / Bem) (Geobacter bemidjiensis).